Here is a 1412-residue protein sequence, read N- to C-terminus: uncharacterized protein (1412 aa).

The segment at 1–22 (MESINVVNSVEDLPGFNPDENV) is disordered. Coiled-coil stretches lie at residues 317 to 377 (NNDF…ILRH) and 732 to 800 (SKEA…SDDE). Residues 778-808 (SRKRKHEDIVKEHEAEKRDSDDEDDFEEVDV) form a disordered region. Residues 783 to 797 (HEDIVKEHEAEKRDS) are compositionally biased toward basic and acidic residues. The span at 798–808 (DDEDDFEEVDV) shows a compositional bias: acidic residues.

This is an uncharacterized protein from Magallana gigas (Pacific oyster).